We begin with the raw amino-acid sequence, 533 residues long: Lysine--tRNA ligase 1 (533 aa).

The short motif at 26–34 (PSGHIHIGN) is the 'HIGH' region element. The 'KMSKS' region signature appears at 272 to 276 (AMSSS).

The protein belongs to the class-I aminoacyl-tRNA synthetase family.

The protein resides in the cytoplasm. The catalysed reaction is tRNA(Lys) + L-lysine + ATP = L-lysyl-tRNA(Lys) + AMP + diphosphate. This chain is Lysine--tRNA ligase 1, found in Methanosarcina acetivorans (strain ATCC 35395 / DSM 2834 / JCM 12185 / C2A).